Consider the following 152-residue polypeptide: Lipoprotein signal peptidase (152 aa).

The next 3 membrane-spanning stretches (helical) occupy residues 5 to 25, 61 to 81, and 84 to 104; these read LFVL…FWIV, WFFV…LATH, and LNIW…GNFI. Residues Asp-114 and Asp-130 contribute to the active site. Residues 125–145 form a helical membrane-spanning segment; sequence IFNVADSYLTVGVILLVICLW.

The protein belongs to the peptidase A8 family.

It localises to the cell membrane. It catalyses the reaction Release of signal peptides from bacterial membrane prolipoproteins. Hydrolyzes -Xaa-Yaa-Zaa-|-(S,diacylglyceryl)Cys-, in which Xaa is hydrophobic (preferably Leu), and Yaa (Ala or Ser) and Zaa (Gly or Ala) have small, neutral side chains.. Its pathway is protein modification; lipoprotein biosynthesis (signal peptide cleavage). In terms of biological role, this protein specifically catalyzes the removal of signal peptides from prolipoproteins. The polypeptide is Lipoprotein signal peptidase (Streptococcus pyogenes serotype M3 (strain ATCC BAA-595 / MGAS315)).